The sequence spans 504 residues: Zinc finger CCCH-type with G patch domain-containing protein (504 aa).

Positions 95-121 (LSEDSNEVKPNPDTDEENEEEEQDISG) are disordered. The segment covering 107–118 (DTDEENEEEEQD) has biased composition (acidic residues). The C3H1-type zinc finger occupies 165–191 (KSMKPCGFYLEGKCRFMDNCRYSHGEV). One can recognise a G-patch domain in the interval 308 to 354 (TRGIGSKLLMKMGYELGKGLGKTLSGRVEPVQAVVLPKGHSLDICAE).

It localises to the nucleus. Its function is as follows. Transcription repressor that specifically binds the 5'-GGAG[GA]A[GA]A-3' consensus sequence. Represses transcription by recruiting the chromatin multiprotein complex NuRD to target promoters. Negatively regulates expression of EGFR, a gene involved in cell proliferation, survival and migration. In Danio rerio (Zebrafish), this protein is Zinc finger CCCH-type with G patch domain-containing protein (zgpat).